Consider the following 441-residue polypeptide: Ribulose bisphosphate carboxylase large chain (441 aa).

The residue at position 5 (K5) is an N6,N6,N6-trimethyllysine. 2 residues coordinate substrate: N114 and T164. K166 (proton acceptor) is an active-site residue. K168 is a substrate binding site. Mg(2+) contacts are provided by K192, D194, and E195. K192 is modified (N6-carboxylysine). H285 functions as the Proton acceptor in the catalytic mechanism. Residues R286, H318, and S370 each contribute to the substrate site.

The protein belongs to the RuBisCO large chain family. Type I subfamily. In terms of assembly, heterohexadecamer of 8 large chains and 8 small chains; disulfide-linked. The disulfide link is formed within the large subunit homodimers. The cofactor is Mg(2+). The disulfide bond which can form in the large chain dimeric partners within the hexadecamer appears to be associated with oxidative stress and protein turnover.

It is found in the plastid. Its subcellular location is the chloroplast. It catalyses the reaction 2 (2R)-3-phosphoglycerate + 2 H(+) = D-ribulose 1,5-bisphosphate + CO2 + H2O. It carries out the reaction D-ribulose 1,5-bisphosphate + O2 = 2-phosphoglycolate + (2R)-3-phosphoglycerate + 2 H(+). Its function is as follows. RuBisCO catalyzes two reactions: the carboxylation of D-ribulose 1,5-bisphosphate, the primary event in carbon dioxide fixation, as well as the oxidative fragmentation of the pentose substrate in the photorespiration process. Both reactions occur simultaneously and in competition at the same active site. This Glycyrrhiza echinata (Licorice) protein is Ribulose bisphosphate carboxylase large chain.